Reading from the N-terminus, the 90-residue chain is Acylphosphatase (90 aa).

The Acylphosphatase-like domain occupies 3–90 (NYKIIVFGTV…KTYNDFSVTY (88 aa)). Catalysis depends on residues R18 and N36.

It belongs to the acylphosphatase family.

It carries out the reaction an acyl phosphate + H2O = a carboxylate + phosphate + H(+). The protein is Acylphosphatase (acyP) of Ligilactobacillus salivarius (strain UCC118) (Lactobacillus salivarius).